A 602-amino-acid chain; its full sequence is Elongation factor 4 (602 aa).

A tr-type G domain is found at Lys-2–Lys-184. GTP is bound by residues Asp-14–Thr-19 and Asn-131–Asp-134.

Belongs to the TRAFAC class translation factor GTPase superfamily. Classic translation factor GTPase family. LepA subfamily.

Its subcellular location is the cell membrane. The catalysed reaction is GTP + H2O = GDP + phosphate + H(+). Functionally, required for accurate and efficient protein synthesis under certain stress conditions. May act as a fidelity factor of the translation reaction, by catalyzing a one-codon backward translocation of tRNAs on improperly translocated ribosomes. Back-translocation proceeds from a post-translocation (POST) complex to a pre-translocation (PRE) complex, thus giving elongation factor G a second chance to translocate the tRNAs correctly. Binds to ribosomes in a GTP-dependent manner. The chain is Elongation factor 4 from Baumannia cicadellinicola subsp. Homalodisca coagulata.